A 96-amino-acid polypeptide reads, in one-letter code: Co-chaperonin GroES (96 aa).

The protein belongs to the GroES chaperonin family. Heptamer of 7 subunits arranged in a ring. Interacts with the chaperonin GroEL.

It is found in the cytoplasm. Together with the chaperonin GroEL, plays an essential role in assisting protein folding. The GroEL-GroES system forms a nano-cage that allows encapsulation of the non-native substrate proteins and provides a physical environment optimized to promote and accelerate protein folding. GroES binds to the apical surface of the GroEL ring, thereby capping the opening of the GroEL channel. The chain is Co-chaperonin GroES from Acidithiobacillus ferrooxidans (strain ATCC 23270 / DSM 14882 / CIP 104768 / NCIMB 8455) (Ferrobacillus ferrooxidans (strain ATCC 23270)).